The primary structure comprises 388 residues: Queuine tRNA-ribosyltransferase (388 aa).

The active-site Proton acceptor is Asp-91. Substrate-binding positions include 91 to 95 (DSGGY), Asp-145, Gln-190, and Gly-217. Residues 248 to 254 (GVGAPED) are RNA binding. Residue Asp-267 is the Nucleophile of the active site. The interval 272–276 (TRLAR) is RNA binding; important for wobble base 34 recognition. Residues Cys-305, Cys-307, Cys-310, and His-336 each contribute to the Zn(2+) site.

This sequence belongs to the queuine tRNA-ribosyltransferase family. As to quaternary structure, homodimer. Within each dimer, one monomer is responsible for RNA recognition and catalysis, while the other monomer binds to the replacement base PreQ1. Zn(2+) is required as a cofactor.

The enzyme catalyses 7-aminomethyl-7-carbaguanine + guanosine(34) in tRNA = 7-aminomethyl-7-carbaguanosine(34) in tRNA + guanine. It participates in tRNA modification; tRNA-queuosine biosynthesis. In terms of biological role, catalyzes the base-exchange of a guanine (G) residue with the queuine precursor 7-aminomethyl-7-deazaguanine (PreQ1) at position 34 (anticodon wobble position) in tRNAs with GU(N) anticodons (tRNA-Asp, -Asn, -His and -Tyr). Catalysis occurs through a double-displacement mechanism. The nucleophile active site attacks the C1' of nucleotide 34 to detach the guanine base from the RNA, forming a covalent enzyme-RNA intermediate. The proton acceptor active site deprotonates the incoming PreQ1, allowing a nucleophilic attack on the C1' of the ribose to form the product. After dissociation, two additional enzymatic reactions on the tRNA convert PreQ1 to queuine (Q), resulting in the hypermodified nucleoside queuosine (7-(((4,5-cis-dihydroxy-2-cyclopenten-1-yl)amino)methyl)-7-deazaguanosine). The sequence is that of Queuine tRNA-ribosyltransferase from Dictyoglomus turgidum (strain DSM 6724 / Z-1310).